Consider the following 81-residue polypeptide: UPF0180 protein RBAM_013970 (81 aa).

It belongs to the UPF0180 family.

In Bacillus velezensis (strain DSM 23117 / BGSC 10A6 / LMG 26770 / FZB42) (Bacillus amyloliquefaciens subsp. plantarum), this protein is UPF0180 protein RBAM_013970.